The sequence spans 180 residues: Trafficking protein particle complex subunit 3 (180 aa).

A lipid anchor (S-palmitoyl cysteine) is attached at Cys68.

It belongs to the TRAPP small subunits family. BET3 subfamily. In terms of assembly, homodimer. Component of the multisubunit transport protein particle (TRAPP) complex, which includes at least TRAPPC2, TRAPPC2L, TRAPPC3, TRAPPC3L, TRAPPC4, TRAPPC5, TRAPPC8, TRAPPC9, TRAPPC10, TRAPPC11 and TRAPPC12. Heterodimer with TRAPPC6A. The heterodimer TRAPPC3-TRAPPC6A interacts with TRAPPC2L. Heterodimer with TRAPPC6b. The heterodimer TRAPPC6B-TRAPPC3 interacts with TRAPPC1 likely providing a core for TRAPP complex formation.

It is found in the golgi apparatus. Its subcellular location is the cis-Golgi network. The protein localises to the endoplasmic reticulum. Functionally, may play a role in vesicular transport from endoplasmic reticulum to Golgi. The polypeptide is Trafficking protein particle complex subunit 3 (Homo sapiens (Human)).